We begin with the raw amino-acid sequence, 992 residues long: Meckelin (992 aa).

Positions Met1–Ala36 are cleaved as a signal peptide. The interval Gln37 to Gly280 is cysteine-rich. The Extracellular segment spans residues Gln37–Asp516. 12 cysteine pairs are disulfide-bonded: Cys49–Cys62, Cys65–Cys78, Cys80–Cys97, Cys100–Cys114, Cys117–Cys127, Cys129–Cys150, Cys153–Cys170, Cys173–Cys184, Cys186–Cys197, Cys237–Cys246, Cys253–Cys268, and Cys354–Cys375. Residue Asn242 is glycosylated (N-linked (GlcNAc...) asparagine). Residues Ala517 to Arg545 form a helical membrane-spanning segment. Topologically, residues Arg546–Gln555 are cytoplasmic. The helical transmembrane segment at Thr556–Phe587 threads the bilayer. The Extracellular portion of the chain corresponds to Lys588–Pro600. Residues Val601–Gln628 form a helical membrane-spanning segment. Over Ile629–Thr667 the chain is Cytoplasmic. An intramembrane region (helical) is located at residues Tyr668–Glu676. The chain crosses the membrane as a discontinuously helical span at residues Tyr668–Val698. An intramembrane segment occupies Ile677–Pro685. An intramembrane region (helical) is located at residues Leu686 to Val698. The Extracellular segment spans residues Val699 to Leu728. Residues Arg729–Arg754 constitute an intramembrane region (helical). The discontinuously helical transmembrane segment at Arg729 to Ser768 threads the bilayer. An intramembrane segment occupies Phe755 to Lys759. The helical intramembrane region spans Ile760 to Ser768. The Cytoplasmic portion of the chain corresponds to Met769–Ser923. Positions Phe924–Ser926 form an intramembrane region, helical. A discontinuously helical membrane pass occupies residues Phe924 to Leu949. The stretch at Val927 to Glu933 is an intramembrane region. The helical intramembrane region spans Ala934 to Leu949. At Ala950–Phe954 the chain is on the extracellular side. The chain crosses the membrane as a helical span at residues Val955–Thr982. Over Lys983–Ile992 the chain is Cytoplasmic.

As to quaternary structure, homodimer. Part of the tectonic-like complex (also named B9 complex). Interacts with DNAJB9, DNAJC10 and mutated SFTPC. Interacts with SYNE2 during the early establishment of cell polarity. Interacts (via C-terminus) with FLNA. Interacts with TMEM218. Interacts with WNT5A. Interacts with ROR2.

The protein resides in the cell membrane. It is found in the endoplasmic reticulum membrane. Its subcellular location is the cytoplasm. It localises to the cytoskeleton. The protein localises to the cilium basal body. Functionally, part of the tectonic-like complex which is required for tissue-specific ciliogenesis and may regulate ciliary membrane composition. Involved in centrosome migration to the apical cell surface during early ciliogenesis. Required for ciliary structure and function, including a role in regulating length and appropriate number through modulating centrosome duplication. Is a key regulator of stereociliary bundle orientation. Required for epithelial cell branching morphology. Essential for endoplasmic reticulum-associated degradation (ERAD) of surfactant protein C (sftpc). Involved in the negative regulation of canonical Wnt signaling, and activation of the non-canonical cascade stimulated by WNT5A. In non-canonical Wnt signaling, it may act as ROR2 coreceptor. The chain is Meckelin (Tmem67) from Mus musculus (Mouse).